Here is a 530-residue protein sequence, read N- to C-terminus: ATP-dependent RNA helicase DBP3 (530 aa).

The segment covering 1 to 20 (MSKDEIKDKKRKSEEYEVVD) has biased composition (basic and acidic residues). The segment at 1 to 77 (MSKDEIKDKK…VASVSTSSTV (77 aa)) is disordered. A coiled-coil region spans residues 19 to 58 (VDKKKHKKDKKDKKEKKDKKEKKLKKDKKDKKDKKETKSE). Over residues 21–50 (KKKHKKDKKDKKEKKDKKEKKLKKDKKDKK) the composition is skewed to basic residues. Over residues 67 to 77 (SVASVSTSSTV) the composition is skewed to low complexity. A Q motif motif is present at residues 117-143 (LSFSHISLDSRIQAEISKFPKPTPIQA). The Helicase ATP-binding domain maps to 146–322 (WPYLLAGKDV…STFMNSPIKV (177 aa)). 159 to 166 (AETGSGKT) serves as a coordination point for ATP. The DEAD box motif lies at 269 to 272 (DEAD). One can recognise a Helicase C-terminal domain in the interval 351–500 (KLLELLKKYQ…PVPEELKKFG (150 aa)).

The protein belongs to the DEAD box helicase family. DDX5/DBP2 subfamily.

The protein resides in the nucleus. Its subcellular location is the nucleolus. It carries out the reaction ATP + H2O = ADP + phosphate + H(+). In terms of biological role, ATP-dependent RNA helicase required for 60S ribosomal subunit synthesis. Involved in efficient pre-rRNA processing, predominantly at site A3, which is necessary for the normal formation of 25S and 5.8S rRNAs. The protein is ATP-dependent RNA helicase DBP3 (DBP3) of Vanderwaltozyma polyspora (strain ATCC 22028 / DSM 70294 / BCRC 21397 / CBS 2163 / NBRC 10782 / NRRL Y-8283 / UCD 57-17) (Kluyveromyces polysporus).